The sequence spans 159 residues: Sperm acrosome-associated protein 5 (159 aa).

The first 21 residues, 1–21 (MKAWGTVVVTLATLMVVTVDA), serve as a signal peptide directing secretion. The C-type lysozyme domain maps to 22-150 (KIYERCELAA…SEWLKGCDMH (129 aa)). Cystine bridges form between C27-C147, C51-C135, C85-C100, and C96-C114. The active site involves E56.

The protein belongs to the glycosyl hydrolase 22 family.

The protein localises to the secreted. It carries out the reaction Hydrolysis of (1-&gt;4)-beta-linkages between N-acetylmuramic acid and N-acetyl-D-glucosamine residues in a peptidoglycan and between N-acetyl-D-glucosamine residues in chitodextrins.. This Homo sapiens (Human) protein is Sperm acrosome-associated protein 5 (SPACA5).